Reading from the N-terminus, the 543-residue chain is Zinc finger protein 280B (543 aa).

Met-1 is modified (N-acetylmethionine). Acidic residues predominate over residues 1-10; it reads MEQSCEEEKE. The segment at 1–23 is disordered; sequence MEQSCEEEKEPEPQKNIQETKQV. 2 positions are modified to phosphoserine: Ser-68 and Ser-70. Residues 105 to 138 are disordered; it reads SQLESRSTDSPIIIEPLSKPDYRNSSPQVVPNNS. The span at 128 to 138 shows a compositional bias: low complexity; that stretch reads NSSPQVVPNNS. Glycyl lysine isopeptide (Lys-Gly) (interchain with G-Cter in SUMO2) cross-links involve residues Lys-173, Lys-247, and Lys-261. C2H2-type zinc fingers lie at residues 343 to 366, 373 to 396, 432 to 454, and 460 to 483; these read TTCQHCHRQFPTPFQLQCHIENVH, TVCKICELSFETDQVLLQHMKDHH, LLCPFCLKIFKTATPYMCHYRGH, and HQCSKCRLQFLTFKEKMEHKTQCH. The interval 518 to 543 is disordered; it reads ASITVSTSDSEPSLPRSKSKISKKSH. The segment covering 534-543 has biased composition (basic residues); that stretch reads SKSKISKKSH.

Its subcellular location is the nucleus. In terms of biological role, may function as a transcription factor. This is Zinc finger protein 280B (ZNF280B) from Homo sapiens (Human).